The chain runs to 492 residues: MO25-like protein 3 (492 aa).

The tract at residues 442 to 492 is disordered; it reads SRAGIRFGETRNVKGSPRSRSQSPRPPTGPEPSPRTTSYQNVRFPPEDSSR. Over residues 465-474 the composition is skewed to pro residues; that stretch reads PRPPTGPEPS.

It belongs to the Mo25 family.

The sequence is that of MO25-like protein 3 from Caenorhabditis briggsae.